The primary structure comprises 285 residues: Bifunctional protein FolD (285 aa).

NADP(+)-binding positions include 166 to 168 (GAS) and isoleucine 232.

The protein belongs to the tetrahydrofolate dehydrogenase/cyclohydrolase family. As to quaternary structure, homodimer.

It catalyses the reaction (6R)-5,10-methylene-5,6,7,8-tetrahydrofolate + NADP(+) = (6R)-5,10-methenyltetrahydrofolate + NADPH. The enzyme catalyses (6R)-5,10-methenyltetrahydrofolate + H2O = (6R)-10-formyltetrahydrofolate + H(+). It participates in one-carbon metabolism; tetrahydrofolate interconversion. Its activity is regulated as follows. The NAD(+)-dependent dehydrogenase is activated by inorganic phosphate. Catalyzes the oxidation of 5,10-methylenetetrahydrofolate to 5,10-methenyltetrahydrofolate and then the hydrolysis of 5,10-methenyltetrahydrofolate to 10-formyltetrahydrofolate. The polypeptide is Bifunctional protein FolD (Photobacterium phosphoreum).